The sequence spans 264 residues: MLELRLVQGSLLKKVLEAVKDLVNDANFDCSTTGFSLQAMDSSHVALVSLLLRSEGFEHYRCDRNLSMGMNLGNMSKMLKCAGNDDIITIKADDGSDTVTFMFESPTQDKIADFEMKLMDIDSEHLGIPDAEYHSIVRMPSGEFSRICKDLSSIGDTVVISVTKEGVKFSTAGDIGTANIVLRQNTTVDKPEDAIVIEMNEPVSLSFALRYMNSFTKATPLSETVTISLSSELPVVVEYKVAEMGYIRYYLAPKIEEEEDTKPE.

A DNA-binding region spans residues 61-80 (RCDRNLSMGMNLGNMSKMLK).

It belongs to the PCNA family. As to quaternary structure, homo- and heterotrimer. Interacts with POLH, ATXR5 and ATXR6.

The protein resides in the nucleus. This protein is an auxiliary protein of DNA polymerase delta and is involved in the control of eukaryotic DNA replication by increasing the polymerase's processibility during elongation of the leading strand. May be involved in UV resistance. This chain is Proliferating cell nuclear antigen 2 (PCNA2), found in Arabidopsis thaliana (Mouse-ear cress).